We begin with the raw amino-acid sequence, 170 residues long: Neurotensin/neuromedin N (170 aa).

The signal sequence occupies residues 1–23 (MMAGMKIQLVCMLLLAFSSWSLC). Gln-151 carries the post-translational modification Pyrrolidone carboxylic acid.

This sequence belongs to the neurotensin family. As to quaternary structure, interacts with NTSR1. Interacts with SORT1. Interacts with SORL1. Post-translationally, neurotensin is cleaved and degraded by Angiotensin-converting enzyme (ACE) and neprilysin (MME).

The protein localises to the secreted. It localises to the cytoplasmic vesicle. It is found in the secretory vesicle. Neurotensin may play an endocrine or paracrine role in the regulation of fat metabolism. It causes contraction of smooth muscle. This chain is Neurotensin/neuromedin N (NTS), found in Homo sapiens (Human).